Here is a 115-residue protein sequence, read N- to C-terminus: Con-Ins G1a (115 aa).

The N-terminal stretch at 1 to 24 (MTTSSYFLLMALGLLLYVCQSSFG) is a signal peptide. A propeptide spanning residues 25–29 (NQHTR) is cleaved from the precursor. Position 34 is a 4-hydroxyproline; partial (Pro34). Intrachain disulfides connect Cys38–Cys101, Cys50–Cys114, and Cys100–Cys105. Glu41 bears the 4-carboxyglutamate mark. A propeptide spans 53–94 (KRNDAGEKRGRASPLWQRRGSLSKLKARAKRNGAFHLPRDGR) (c peptide). Position 98 is a 4-carboxyglutamate (Glu98). 4-hydroxyproline; partial is present on Pro104. Glu109 carries the 4-carboxyglutamate; partial modification. Cys114 carries the cysteine amide modification.

The protein belongs to the insulin family. In terms of assembly, heterodimer of A and B chains; disulfide-linked. Expressed by the venom gland.

It is found in the secreted. In terms of biological role, this venom insulin, from a fish-hunting cone snail, facilitates prey capture by rapidly inducing hypoglycemic shock. It is one of the smallest known insulin found in nature and lacks the C-terminal segment of the B chain that, in human insulin, mediates engagement of the insulin receptor (INSR) and assembly of the hormone's hexameric storage form. Despite lacking this segment, it both binds and activates human insulin receptor (long isoform (HIR-B)) with a high potency (EC(50)=16.28 nM). In vivo, intraperitoneal injection of this peptide into zebrafish lowers blood glucose with the same potency than human insulin. In addition, when applied to water, this peptide reduces overall locomotor activity of zebrafish larvae, observed as a significant decrease in the percentage of time spent swimming and movement frequency. When tested on a mouse model of diabetes, this insulin also lowers blood glucose with a 10-fold lower potency than human insulin. The sequence is that of Con-Ins G1a from Conus geographus (Geography cone).